A 195-amino-acid chain; its full sequence is Pyridoxal 5'-phosphate synthase subunit PdxT (195 aa).

An L-glutamine-binding site is contributed by 46–48; sequence GES. Cys-78 acts as the Nucleophile in catalysis. L-glutamine contacts are provided by residues Arg-107 and 135–136; that span reads IR. Residues His-172 and Glu-174 each act as charge relay system in the active site.

Belongs to the glutaminase PdxT/SNO family. In terms of assembly, in the presence of PdxS, forms a dodecamer of heterodimers. Only shows activity in the heterodimer.

The catalysed reaction is aldehydo-D-ribose 5-phosphate + D-glyceraldehyde 3-phosphate + L-glutamine = pyridoxal 5'-phosphate + L-glutamate + phosphate + 3 H2O + H(+). It carries out the reaction L-glutamine + H2O = L-glutamate + NH4(+). Its pathway is cofactor biosynthesis; pyridoxal 5'-phosphate biosynthesis. In terms of biological role, catalyzes the hydrolysis of glutamine to glutamate and ammonia as part of the biosynthesis of pyridoxal 5'-phosphate. The resulting ammonia molecule is channeled to the active site of PdxS. This Corynebacterium jeikeium (strain K411) protein is Pyridoxal 5'-phosphate synthase subunit PdxT.